The primary structure comprises 93 residues: YcgL domain-containing protein Swoo_2115 (93 aa).

The region spanning 1-85 (MICAVYKSRR…PVVNLLEEHK (85 aa)) is the YcgL domain.

The protein is YcgL domain-containing protein Swoo_2115 of Shewanella woodyi (strain ATCC 51908 / MS32).